The chain runs to 819 residues: Proteome of basal body protein 15 (819 aa).

2 stretches are compositionally biased toward low complexity: residues 46 to 59 (PASSPAKAPANPGR) and 572 to 581 (RQQQQQQQHT). Disordered regions lie at residues 46 to 72 (PASSPAKAPANPGRSAPPSPGPRLATG) and 564 to 590 (ERQRRLLERQQQQQQQHTKGGGGGGGV). Residues 546 to 580 (YVVLREAVARVQARMEQQERQRRLLERQQQQQQQH) are a coiled coil.

The protein localises to the cytoplasm. Its subcellular location is the cytoskeleton. It localises to the microtubule organizing center. The protein resides in the centrosome. It is found in the centriole. The chain is Proteome of basal body protein 15 from Chlamydomonas reinhardtii (Chlamydomonas smithii).